We begin with the raw amino-acid sequence, 459 residues long: Mitochondrial distribution and morphology protein 34 (459 aa).

The region spanning 1–190 (MSFRFNEAVF…LPSLIFNTSQ (190 aa)) is the SMP-LTD domain. Over residues 338 to 347 (RSNSNDDNAK) the composition is skewed to basic and acidic residues. Residues 338–375 (RSNSNDDNAKPRRRKIKCKKTRTPSNLQSQGEQAVDDS) are disordered. The segment covering 348-359 (PRRRKIKCKKTR) has biased composition (basic residues).

Belongs to the MDM34 family. As to quaternary structure, component of the ER-mitochondria encounter structure (ERMES) or MDM complex, composed of MMM1, MDM10, MDM12 and MDM34. Post-translationally, ubiquitinated by a SCF (SKP1-CUL1-F-box protein) E3 ubiquitin-protein ligase complex containing the F-box protein MDM30. Ubiquitination is important for mitochondrial integrity.

The protein localises to the mitochondrion outer membrane. Its function is as follows. Component of the ERMES/MDM complex, which serves as a molecular tether to connect the endoplasmic reticulum (ER) and mitochondria. Components of this complex are involved in the control of mitochondrial shape and protein biogenesis, and function in nonvesicular lipid trafficking between the ER and mitochondria. MDM34 is required for the interaction of the ER-resident membrane protein MMM1 and the outer mitochondrial membrane-resident beta-barrel protein MDM10. In Saccharomyces cerevisiae (strain YJM789) (Baker's yeast), this protein is Mitochondrial distribution and morphology protein 34.